The primary structure comprises 64 residues: Large ribosomal subunit protein eL24 (64 aa).

Zn(2+) contacts are provided by cysteine 6, cysteine 9, cysteine 32, and cysteine 36. The segment at 6 to 36 adopts a C4-type zinc-finger fold; that stretch reads CNFCGKSIEPGTGKKFVKKDGSVMFICSSKC.

Belongs to the eukaryotic ribosomal protein eL24 family. Part of the 50S ribosomal subunit. Forms a cluster with proteins L3 and L14. It depends on Zn(2+) as a cofactor.

Its function is as follows. Binds to the 23S rRNA. The polypeptide is Large ribosomal subunit protein eL24 (Methanococcus aeolicus (strain ATCC BAA-1280 / DSM 17508 / OCM 812 / Nankai-3)).